The primary structure comprises 186 residues: Elongation factor P (186 aa).

The protein belongs to the elongation factor P family.

The protein localises to the cytoplasm. It functions in the pathway protein biosynthesis; polypeptide chain elongation. In terms of biological role, involved in peptide bond synthesis. Stimulates efficient translation and peptide-bond synthesis on native or reconstituted 70S ribosomes in vitro. Probably functions indirectly by altering the affinity of the ribosome for aminoacyl-tRNA, thus increasing their reactivity as acceptors for peptidyl transferase. This chain is Elongation factor P, found in Shewanella frigidimarina (strain NCIMB 400).